Here is a 589-residue protein sequence, read N- to C-terminus: Complement component C8 beta chain (589 aa).

An N-terminal signal peptide occupies residues 1–31; sequence MKTGAQVWRALAKSCLLCAALGCLHLPGARG. Positions 32-53 are excised as a propeptide; it reads EKPDFFETNAVNGSLVRSRPVR. A glycan (N-linked (GlcNAc...) asparagine) is linked at Asn-43. Positions 63–116 constitute a TSP type-1 1 domain; that stretch reads DCQLSTWSSWTACDPCQKKRYRHTYLLRPSQFYGELCDFSDKEVEDCVTNRACR. 7 disulfides stabilise this stretch: Cys-64–Cys-99, Cys-75–Cys-109, Cys-78–Cys-115, Cys-121–Cys-132, Cys-126–Cys-145, Cys-139–Cys-154, and Cys-161–Cys-199. Residues Trp-69 and Trp-72 are each glycosylated (C-linked (Man) tryptophan). The LDL-receptor class A domain maps to 120–155; that stretch reads RCEGFVCAQTGRCVNRRLLCNGDNDCGDQSDEANCR. Ca(2+) contacts are provided by Leu-137, Asn-140, Asp-142, Asp-144, Asp-150, and Glu-151. Residues 157 to 503 enclose the MACPF domain; sequence IYKKCSQDME…EFQMEVSSCR (347 aa). N-linked (GlcNAc...) asparagine glycosylation is present at Asn-242. A run of 4 beta stranded transmembrane segments spans residues 251-258, 261-268, 378-385, and 391-398; these read SSFKFGFK, GLVEFGVR, AGGGFQIG, and VYLKLGVS. A disulfide bond links Cys-377 and Cys-402. Thr-417 is modified (phosphothreonine). Disulfide bonds link Cys-502/Cys-549, Cys-504/Cys-520, Cys-507/Cys-522, and Cys-524/Cys-533. The EGF-like domain occupies 504–534; the sequence is CAPCRNNGVPILKESRCECICPAGFQGVACE. A TSP type-1 2 domain is found at 544–587; the sequence is DGKWSCWSDWSPCSGGRKTRQRQCNNPAPQRGGSPCSGPASETL. C-linked (Man) tryptophan glycans are attached at residues Trp-550 and Trp-553. A disulfide bridge connects residues Cys-556 and Cys-589. Residues 556–589 are disordered; that stretch reads CSGGRKTRQRQCNNPAPQRGGSPCSGPASETLDC.

It belongs to the complement C6/C7/C8/C9 family. In terms of assembly, heterotrimer of 3 chains: alpha (C8A), beta (C8B) and gamma (C8G); the alpha and gamma chains are disulfide bonded. Component of the membrane attack complex (MAC), composed of complement C5b, C6, C7, C8A, C8B, C8G and multiple copies of the pore-forming subunit C9. Post-translationally, N-glycosylated; contains one or two bound glycans. Not O-glycosylated.

Its subcellular location is the secreted. The protein resides in the target cell membrane. With respect to regulation, membrane attack complex (MAC) assembly is inhibited by CD59, thereby protecting self-cells from damage during complement activation. CD59 acts by binding to the beta-haipins of C8 (C8A and C8B), forming an intermolecular beta-sheet that prevents incorporation of the multiple copies of C9 required for complete formation of the osmolytic pore. MAC assembly is also inhibited by clusterin (CLU) chaperones that inhibit polymerization of C9. Its function is as follows. Component of the membrane attack complex (MAC), a multiprotein complex activated by the complement cascade, which inserts into a target cell membrane and forms a pore, leading to target cell membrane rupture and cell lysis. The MAC is initiated by proteolytic cleavage of C5 into complement C5b in response to the classical, alternative, lectin and GZMK complement pathways. The complement pathways consist in a cascade of proteins that leads to phagocytosis and breakdown of pathogens and signaling that strengthens the adaptive immune system. C8B, together with C8A and C8G, inserts into the target membrane, but does not form pores by itself. During MAC assembly, associates with C5b, C6 and C7 to form the C5b8 intermediate complex that inserts into the target membrane and traverses the bilayer increasing membrane rigidity. This Rattus norvegicus (Rat) protein is Complement component C8 beta chain (C8b).